The following is a 245-amino-acid chain: tRNA1(Val) (adenine(37)-N6)-methyltransferase (245 aa).

The protein belongs to the methyltransferase superfamily. tRNA (adenine-N(6)-)-methyltransferase family.

Its subcellular location is the cytoplasm. It carries out the reaction adenosine(37) in tRNA1(Val) + S-adenosyl-L-methionine = N(6)-methyladenosine(37) in tRNA1(Val) + S-adenosyl-L-homocysteine + H(+). Specifically methylates the adenine in position 37 of tRNA(1)(Val) (anticodon cmo5UAC). This chain is tRNA1(Val) (adenine(37)-N6)-methyltransferase, found in Enterobacter sp. (strain 638).